We begin with the raw amino-acid sequence, 518 residues long: Bifunctional purine biosynthesis protein PurH (518 aa).

One can recognise an MGS-like domain in the interval 1–144 (MSKRALISVS…KNHASVTVVC (144 aa)).

The protein belongs to the PurH family.

The enzyme catalyses (6R)-10-formyltetrahydrofolate + 5-amino-1-(5-phospho-beta-D-ribosyl)imidazole-4-carboxamide = 5-formamido-1-(5-phospho-D-ribosyl)imidazole-4-carboxamide + (6S)-5,6,7,8-tetrahydrofolate. It catalyses the reaction IMP + H2O = 5-formamido-1-(5-phospho-D-ribosyl)imidazole-4-carboxamide. It functions in the pathway purine metabolism; IMP biosynthesis via de novo pathway; 5-formamido-1-(5-phospho-D-ribosyl)imidazole-4-carboxamide from 5-amino-1-(5-phospho-D-ribosyl)imidazole-4-carboxamide (10-formyl THF route): step 1/1. It participates in purine metabolism; IMP biosynthesis via de novo pathway; IMP from 5-formamido-1-(5-phospho-D-ribosyl)imidazole-4-carboxamide: step 1/1. This Lactococcus lactis subsp. lactis (strain IL1403) (Streptococcus lactis) protein is Bifunctional purine biosynthesis protein PurH.